The chain runs to 352 residues: tRNA-specific 2-thiouridylase MnmA (352 aa).

ATP is bound by residues 7-14 and L33; that span reads GLSGGVDS. C94 acts as the Nucleophile in catalysis. C94 and C193 form a disulfide bridge. ATP is bound at residue G119. Residues 143-145 are interaction with tRNA; sequence KDQ. The Cysteine persulfide intermediate role is filled by C193. The interaction with tRNA stretch occupies residues 298-299; sequence RY.

The protein belongs to the MnmA/TRMU family.

It localises to the cytoplasm. The catalysed reaction is S-sulfanyl-L-cysteinyl-[protein] + uridine(34) in tRNA + AH2 + ATP = 2-thiouridine(34) in tRNA + L-cysteinyl-[protein] + A + AMP + diphosphate + H(+). Its function is as follows. Catalyzes the 2-thiolation of uridine at the wobble position (U34) of tRNA, leading to the formation of s(2)U34. The chain is tRNA-specific 2-thiouridylase MnmA from Trichormus variabilis (strain ATCC 29413 / PCC 7937) (Anabaena variabilis).